Here is a 572-residue protein sequence, read N- to C-terminus: MLFFLNFFVLVFSIELALLTASAAAEDGSYEIIILHTNDMHARFDQTNAGSNKCQEKDKIASKCYGGFARVSTMVKKFREENGSSVLFLNAGDTYTGTPWFTLYKETIATEMMNILRPDAASLGNHEFDKGVEGLVPFLNGVTFPILTANLDTSQEPTMTNAKNLKRSMIFTVSGHRVGVIGYLTPDTKFLSDVGKVNFIPEVEAINTEAQRLKKEENAEIIIVVGHSGLIKDREIAEKCPLVDIIVGGHSHTFLYTGSQPDREVPVDVYPVVVTQSSGKKVPIVQAYCFTKYLGYFKVTINGKGNVVGWTGQPILLNNNIPQDQEVLTALEKYRERVENYGNRVIGVSRVILNGGHTECRFHECNMGNLITDAFVYANVISTPMSTNAWTDASVVLYQSGGIRAPIDPRTAAGSITRLELDNVLPFGNALYVVKVPGNVLRKALEHSVHRYSNTSGWGEFPQVSGLKIRFNVNEEIGKRVKSVKVLCSNCSQPEYQPLRNKKTYNVIMDSFMKDGGDGYSMFKPLKIIKTLPLGDIETVEAYIEKMGPIFPAVEGRITVLGGLQKSDEDWH.

The first 25 residues, 1–25 (MLFFLNFFVLVFSIELALLTASAAA), serve as a signal peptide directing secretion. Zn(2+) is bound by residues D39 and H41. The cysteines at positions 54 and 64 are disulfide-linked. N82 carries N-linked (GlcNAc...) asparagine glycosylation. The Zn(2+) site is built by D93, N125, H227, and H250. C360 and C365 are oxidised to a cystine. Positions 361, 399, 404, and 427 each coordinate substrate. 2 N-linked (GlcNAc...) asparagine glycosylation sites follow: N454 and N490. C488 and C491 are joined by a disulfide. A substrate-binding site is contributed by 512–518 (FMKDGGD).

It belongs to the 5'-nucleotidase family. The cofactor is Zn(2+).

The catalysed reaction is UDP-sugar + H2O = UMP + alpha-D-aldose 1-phosphate.. The enzyme catalyses a ribonucleoside 5'-phosphate + H2O = a ribonucleoside + phosphate. Degradation of external UDP-glucose to uridine monophosphate and glucose-1-phosphate, which can then be used by the cell. The polypeptide is Protein 5NUC (5NUC) (Lutzomyia longipalpis (Sand fly)).